We begin with the raw amino-acid sequence, 430 residues long: MGQPEGLERFDSPGKGRGLKATRSFALGELLFTCPAYTYVLTDTERGNHCDFCFARKEGLSKCGKCKQAFYCNVDCQKGDWPMHKLECSAMCSYGQNWCPSETVRLTARILAKQKTQTERTPSETFLSVKEFESHLSKLDNEKKELIESDIAALHRFYSKNLHYTDNAALVFLFAQVNCNGFTIEDEELSHLGSAIFPDVALMNHSCCPNIIVTFKGTVAEIRAVQEIHAGDEVFTSYIDLLYPTEDRNDRLMDSYFFTCDCRECSTKQKDPAKLEIRKLSDPPSHQTVKDMIKYARNIVEEFRRAKHYKTPSELLEMCELSLDKMGSVFVDSNVYMLHMMYQAMGVCLYLQEWDGALKYGEKIIKPYSKHYPAYSLNVASMWLKLGRLYMGLEKTTIGTKALKKALAIMQIAHGPDHHYIAEIKKELEL.

The SET domain occupies E5–I239. S-adenosyl-L-methionine is bound at residue K15–R17. Residues C50, C53, C63, C66, C72, C76, H84, and C88 each coordinate Zn(2+). An MYND-type zinc finger spans residues C50 to C88. S-adenosyl-L-methionine-binding positions include H135, N204–H205, and Y256–F258.

The protein belongs to the class V-like SAM-binding methyltransferase superfamily.

The protein resides in the cytoplasm. The protein localises to the cytosol. It is found in the nucleus. It carries out the reaction L-lysyl(4)-[histone H3] + 3 S-adenosyl-L-methionine = N(6),N(6),N(6)-trimethyl-L-lysyl(4)-[histone H3] + 3 S-adenosyl-L-homocysteine + 3 H(+). It catalyses the reaction L-lysyl-[protein] + S-adenosyl-L-methionine = N(6)-methyl-L-lysyl-[protein] + S-adenosyl-L-homocysteine + H(+). In terms of biological role, protein-lysine N-methyltransferase that methylates both histones and non-histone proteins, including p53/TP53 and RB1. Specifically trimethylates histone H3 'Lys-4' (H3K4me3) in vivo. The activity requires interaction with HSP90alpha. Shows even higher methyltransferase activity on p53/TP53. Monomethylates 'Lys-370' of p53/TP53, leading to decreased DNA-binding activity and subsequent transcriptional regulation activity of p53/TP53. Monomethylates RB1 at 'Lys-860'. The protein is N-lysine methyltransferase SMYD2-A (smyd2-a) of Xenopus laevis (African clawed frog).